Consider the following 550-residue polypeptide: Arginine--tRNA ligase (550 aa).

Residues 130-140 carry the 'HIGH' region motif; it reads ANPTGPIHIGG.

Belongs to the class-I aminoacyl-tRNA synthetase family. As to quaternary structure, monomer.

The protein resides in the cytoplasm. The enzyme catalyses tRNA(Arg) + L-arginine + ATP = L-arginyl-tRNA(Arg) + AMP + diphosphate. This chain is Arginine--tRNA ligase, found in Mycobacterium sp. (strain JLS).